We begin with the raw amino-acid sequence, 386 residues long: 2,3-diketo-5-methylthiopentyl-1-phosphate enolase (386 aa).

The active-site Proton acceptor is K85. Residues K131, 157–160 (KDDE), H248, G316, and 338–339 (GT) contribute to the substrate site. Positions 157, 159, and 160 each coordinate Mg(2+). K157 is modified (N6-carboxylysine).

It belongs to the RuBisCO large chain family. Type IV subfamily. As to quaternary structure, homodimer. Mg(2+) is required as a cofactor.

It carries out the reaction 5-methylsulfanyl-2,3-dioxopentyl phosphate = 2-hydroxy-5-methylsulfanyl-3-oxopent-1-enyl phosphate. It functions in the pathway amino-acid biosynthesis; L-methionine biosynthesis via salvage pathway; L-methionine from S-methyl-5-thio-alpha-D-ribose 1-phosphate: step 3/6. Functionally, catalyzes the enolization of 2,3-diketo-5-methylthiopentyl-1-phosphate (DK-MTP-1-P) into 2-hydroxy-3-keto-5-methylthiopentenyl-1-phosphate (HK-MTPenyl-1-P). This Microcystis aeruginosa (strain NIES-843 / IAM M-2473) protein is 2,3-diketo-5-methylthiopentyl-1-phosphate enolase.